A 234-amino-acid chain; its full sequence is Synaptogyrin-4 (234 aa).

An MARVEL domain is found at 18–169; that stretch reads FLRRPKTITR…QAYLAFQDLR (152 aa). The next 4 helical transmembrane spans lie at 25–45, 66–86, 104–124, and 145–165; these read ITRV…LTDG, CSFA…FLVL, LLDF…FCFL, and AAIA…YLAF.

This sequence belongs to the synaptogyrin family.

The protein resides in the membrane. The chain is Synaptogyrin-4 (SYNGR4) from Homo sapiens (Human).